The following is a 277-amino-acid chain: Large ribosomal subunit protein uL2 (277 aa).

The tract at residues G222–K277 is disordered.

It belongs to the universal ribosomal protein uL2 family. As to quaternary structure, part of the 50S ribosomal subunit. Forms a bridge to the 30S subunit in the 70S ribosome.

Functionally, one of the primary rRNA binding proteins. Required for association of the 30S and 50S subunits to form the 70S ribosome, for tRNA binding and peptide bond formation. It has been suggested to have peptidyltransferase activity; this is somewhat controversial. Makes several contacts with the 16S rRNA in the 70S ribosome. The polypeptide is Large ribosomal subunit protein uL2 (Rhodopseudomonas palustris (strain BisB18)).